Reading from the N-terminus, the 363-residue chain is 3-isopropylmalate dehydrogenase (363 aa).

78 to 91 (GPKWEHLPPDQQPE) provides a ligand contact to NAD(+). Substrate contacts are provided by Arg99, Arg109, Arg138, and Asp227. Mg(2+) is bound by residues Asp227, Asp251, and Asp255. 285-297 (GSAPDIAGKNIAN) lines the NAD(+) pocket.

It belongs to the isocitrate and isopropylmalate dehydrogenases family. LeuB type 1 subfamily. As to quaternary structure, homodimer. Mg(2+) serves as cofactor. Requires Mn(2+) as cofactor.

It is found in the cytoplasm. It carries out the reaction (2R,3S)-3-isopropylmalate + NAD(+) = 4-methyl-2-oxopentanoate + CO2 + NADH. It participates in amino-acid biosynthesis; L-leucine biosynthesis; L-leucine from 3-methyl-2-oxobutanoate: step 3/4. With respect to regulation, requires K(+) ions for optimum activity. Catalyzes the oxidation of 3-carboxy-2-hydroxy-4-methylpentanoate (3-isopropylmalate) to 3-carboxy-4-methyl-2-oxopentanoate. The product decarboxylates to 4-methyl-2 oxopentanoate. The chain is 3-isopropylmalate dehydrogenase from Escherichia coli (strain K12).